The following is a 425-amino-acid chain: Protein CLP1 homolog (425 aa).

Residues Glu-18, Lys-59, and 121 to 126 (DVGKST) contribute to the ATP site.

It belongs to the Clp1 family. Clp1 subfamily.

It localises to the nucleus. Required for endonucleolytic cleavage during polyadenylation-dependent pre-mRNA 3'-end formation. The chain is Protein CLP1 homolog (cbc) from Drosophila ananassae (Fruit fly).